The chain runs to 1012 residues: Formate dehydrogenase subunit alpha (1012 aa).

Positions 1-35 (MLIKRRAFLKLTAAGATLSAFGGLGVDLAPAKAQA) form a signal peptide, tat-type signal. The 59-residue stretch at 45 to 103 (AKQTTSVCCYCSVGCGLIVHTDKKTNRAINVEGDPDHPINEGSLCAKGASTWQLAENER) folds into the 4Fe-4S Mo/W bis-MGD-type domain. Cys52, Cys55, Cys59, and Cys89 together coordinate [4Fe-4S] cluster. Sec193 is a W-bis(molybdopterin guanine dinucleotide) binding site. A non-standard amino acid (selenocysteine) is located at residue Sec193. The Ca(2+) site is built by Thr393, Lys395, Lys398, Leu428, and Asn430. Residues Cys852 and Cys879 are joined by a disulfide bond.

Belongs to the prokaryotic molybdopterin-containing oxidoreductase family. As to quaternary structure, heterodimer of alpha (FdhA) and beta (FdhB) subunits. [4Fe-4S] cluster is required as a cofactor. W-bis(molybdopterin guanine dinucleotide) serves as cofactor. Post-translationally, the disulfide bond is likely to be broken in the active form of this enzyme. Predicted to be exported by the Tat system. The position of the signal peptide cleavage has been experimentally proven.

The protein localises to the periplasm. It catalyses the reaction formate + NAD(+) = CO2 + NADH. Functionally, alpha chain of the formate dehydrogenase (FDH) catalyze the reversible two-electron oxidation of formate to carbon dioxide. FDH loses activity in the presence of air, but this activity can be restored. The alpha subunit of formate dehydrogenase forms the active site. This chain is Formate dehydrogenase subunit alpha, found in Megalodesulfovibrio gigas (Desulfovibrio gigas).